The primary structure comprises 329 residues: Holliday junction branch migration complex subunit RuvB (329 aa).

The segment at 1–180 is large ATPase domain (RuvB-L); that stretch reads MKNILQSTEC…FGIPIHLEFY (180 aa). ATP is bound by residues isoleucine 19, arginine 20, glycine 61, lysine 64, threonine 65, threonine 66, 127–129, arginine 170, tyrosine 180, and arginine 217; that span reads EDF. A Mg(2+)-binding site is contributed by threonine 65. The tract at residues 181–252 is small ATPAse domain (RuvB-S); that stretch reads STEELIKVIQ…FADKALLRLG (72 aa). Positions 255–329 are head domain (RuvB-H); it reads KLGLDRQDIQ…ISYLKEQSYI (75 aa). Arginine 308 and arginine 313 together coordinate DNA.

The protein belongs to the RuvB family. As to quaternary structure, homohexamer. Forms an RuvA(8)-RuvB(12)-Holliday junction (HJ) complex. HJ DNA is sandwiched between 2 RuvA tetramers; dsDNA enters through RuvA and exits via RuvB. An RuvB hexamer assembles on each DNA strand where it exits the tetramer. Each RuvB hexamer is contacted by two RuvA subunits (via domain III) on 2 adjacent RuvB subunits; this complex drives branch migration. In the full resolvosome a probable DNA-RuvA(4)-RuvB(12)-RuvC(2) complex forms which resolves the HJ.

The protein localises to the cytoplasm. The enzyme catalyses ATP + H2O = ADP + phosphate + H(+). The RuvA-RuvB-RuvC complex processes Holliday junction (HJ) DNA during genetic recombination and DNA repair, while the RuvA-RuvB complex plays an important role in the rescue of blocked DNA replication forks via replication fork reversal (RFR). RuvA specifically binds to HJ cruciform DNA, conferring on it an open structure. The RuvB hexamer acts as an ATP-dependent pump, pulling dsDNA into and through the RuvAB complex. RuvB forms 2 homohexamers on either side of HJ DNA bound by 1 or 2 RuvA tetramers; 4 subunits per hexamer contact DNA at a time. Coordinated motions by a converter formed by DNA-disengaged RuvB subunits stimulates ATP hydrolysis and nucleotide exchange. Immobilization of the converter enables RuvB to convert the ATP-contained energy into a lever motion, pulling 2 nucleotides of DNA out of the RuvA tetramer per ATP hydrolyzed, thus driving DNA branch migration. The RuvB motors rotate together with the DNA substrate, which together with the progressing nucleotide cycle form the mechanistic basis for DNA recombination by continuous HJ branch migration. Branch migration allows RuvC to scan DNA until it finds its consensus sequence, where it cleaves and resolves cruciform DNA. This Ehrlichia canis (strain Jake) protein is Holliday junction branch migration complex subunit RuvB.